A 317-amino-acid polypeptide reads, in one-letter code: Serpentine receptor class delta-47 (317 aa).

The next 7 membrane-spanning stretches (helical) occupy residues 8–28 (IFYP…FVVV), 42–62 (VLFC…LLQL), 89–109 (CLYF…LLTI), 128–148 (IVII…IYSV), 185–205 (YLII…GLYT), 239–259 (ACLP…VIGT), and 270–290 (ISVL…YSVA).

Belongs to the nematode receptor-like protein srd family.

The protein resides in the membrane. The chain is Serpentine receptor class delta-47 (srd-47) from Caenorhabditis elegans.